The chain runs to 62 residues: MPNILSLTCICFNSVLYPTTSFFFAKLPEAYAIFNPIVDVMPVIPLFFFLLAFVWQAAVSFR.

Positions Met1–Ala25 are excised as a propeptide. A helical membrane pass occupies residues Ile33–Phe53.

Belongs to the PsbK family. In terms of assembly, PSII is composed of 1 copy each of membrane proteins PsbA, PsbB, PsbC, PsbD, PsbE, PsbF, PsbH, PsbI, PsbJ, PsbK, PsbL, PsbM, PsbT, PsbX, PsbY, PsbZ, Psb30/Ycf12, at least 3 peripheral proteins of the oxygen-evolving complex and a large number of cofactors. It forms dimeric complexes.

It is found in the plastid. Its subcellular location is the chloroplast thylakoid membrane. In terms of biological role, one of the components of the core complex of photosystem II (PSII). PSII is a light-driven water:plastoquinone oxidoreductase that uses light energy to abstract electrons from H(2)O, generating O(2) and a proton gradient subsequently used for ATP formation. It consists of a core antenna complex that captures photons, and an electron transfer chain that converts photonic excitation into a charge separation. This Agrostis stolonifera (Creeping bentgrass) protein is Photosystem II reaction center protein K.